The following is a 130-amino-acid chain: Small ribosomal subunit protein uS9 (130 aa).

This sequence belongs to the universal ribosomal protein uS9 family.

The chain is Small ribosomal subunit protein uS9 from Phytoplasma australiense.